Here is a 1450-residue protein sequence, read N- to C-terminus: ABC transporter G family member 37 (1450 aa).

The 274-residue stretch at 158 to 431 (GNALHILPNK…FEFMGFRCPA (274 aa)) folds into the ABC transporter 1 domain. 191-198 (GPPGSGKT) serves as a coordination point for ATP. The 213-residue stretch at 509–721 (ELLKATIDRE…AQNAISTNEF (213 aa)) folds into the ABC transmembrane type-2 1 domain. A run of 6 helical transmembrane segments spans residues 527 to 547 (FMYIFKAVNLTLMALIVMTTF), 559 to 579 (GMIYLGALYFALDTVMFNGFA), 614 to 634 (IPITFLEVGVYVFITYYVIGF), 646 to 666 (LLLLALNQMSSALFRFIAGIG), 670 to 690 (VVSHTFGPLSLLAFAALGGFI), and 756 to 776 (IGLGALLGYTLLFNLLYTVAL). Positions 852-1104 (ISFNDVRYSV…KLIEYFEGID (253 aa)) constitute an ABC transporter 2 domain. 897 to 904 (GVSGAGKT) is a binding site for ATP. Residues 1177-1391 (TQCLACLWKQ…TLYGLVASQF (215 aa)) form the ABC transmembrane type-2 2 domain. 7 helical membrane passes run 1198 to 1218 (AVRLLFTIVIALMFGTMFWNL), 1236 to 1256 (YAAVLYIGVQNSGSVQPVVVV), 1284 to 1304 (LPYIMVQTLIYGVLVYSMIGF), 1311 to 1331 (FLWYLFFMYFTLLYFTFYGMM), 1341 to 1361 (IAAIISSAFYNVWNLFSGYLI), 1372 to 1392 (WYCWICPVAWTLYGLVASQFG), and 1422 to 1442 (VVAVVHVVFAVTFAFLFSFAI).

This sequence belongs to the ABC transporter superfamily. ABCG family. PDR (TC 3.A.1.205) subfamily.

The protein resides in the membrane. May be a general defense protein. The chain is ABC transporter G family member 37 from Oryza sativa subsp. japonica (Rice).